Reading from the N-terminus, the 58-residue chain is Large ribosomal subunit protein bL32 (58 aa).

It belongs to the bacterial ribosomal protein bL32 family.

This Anaplasma phagocytophilum (strain HZ) protein is Large ribosomal subunit protein bL32.